The chain runs to 262 residues: Phosphonates import ATP-binding protein PhnC (262 aa).

Positions Ile5–Asn253 constitute an ABC transporter domain. ATP is bound at residue Gly37–Ser44.

This sequence belongs to the ABC transporter superfamily. Phosphonates importer (TC 3.A.1.9.1) family. In terms of assembly, the complex is composed of two ATP-binding proteins (PhnC), two transmembrane proteins (PhnE) and a solute-binding protein (PhnD).

Its subcellular location is the cell inner membrane. It carries out the reaction phosphonate(out) + ATP + H2O = phosphonate(in) + ADP + phosphate + H(+). Its function is as follows. Part of the ABC transporter complex PhnCDE involved in phosphonates import. Responsible for energy coupling to the transport system. The protein is Phosphonates import ATP-binding protein PhnC of Shigella sonnei (strain Ss046).